A 685-amino-acid polypeptide reads, in one-letter code: Augmin complex subunit dgt5 (685 aa).

2 coiled-coil regions span residues 87–165 (LQRY…NKIQ) and 342–379 (NMRNFNRSQNEFLREQIEQLRLELDAGAKQLENHDLKL).

As to quaternary structure, component of the augmin complex composed of dgt2, dgt3, dgt4, dgt5, dgt6, msd1, msd5 and wac. The complex interacts directly or indirectly with microtubules and is required for centrosome-independent generation of spindle microtubules.

The protein resides in the cytoplasm. The protein localises to the cytoskeleton. Its subcellular location is the spindle. It is found in the chromosome. It localises to the centromere. The protein resides in the kinetochore. The protein localises to the microtubule organizing center. Its subcellular location is the centrosome. In terms of biological role, as part of the augmin complex, plays a role in centrosome-independent generation of spindle microtubules. The complex is required for mitotic spindle assembly through its involvement in localizing gamma-tubulin to spindle microtubules. The chain is Augmin complex subunit dgt5 from Drosophila melanogaster (Fruit fly).